The sequence spans 288 residues: Sulfur carrier protein FdhD (288 aa).

Cys-122 functions as the Cysteine persulfide intermediate in the catalytic mechanism. Position 268 to 273 (268 to 273) interacts with Mo-bis(molybdopterin guanine dinucleotide); the sequence is FVRGER.

Belongs to the FdhD family.

It localises to the cytoplasm. Required for formate dehydrogenase (FDH) activity. Acts as a sulfur carrier protein that transfers sulfur from IscS to the molybdenum cofactor prior to its insertion into FDH. The sequence is that of Sulfur carrier protein FdhD from Anaeromyxobacter sp. (strain K).